The primary structure comprises 213 residues: Large ribosomal subunit protein uL4 (213 aa).

The disordered stretch occupies residues glycine 41–proline 75.

The protein belongs to the universal ribosomal protein uL4 family. In terms of assembly, part of the 50S ribosomal subunit.

Its function is as follows. One of the primary rRNA binding proteins, this protein initially binds near the 5'-end of the 23S rRNA. It is important during the early stages of 50S assembly. It makes multiple contacts with different domains of the 23S rRNA in the assembled 50S subunit and ribosome. Functionally, forms part of the polypeptide exit tunnel. In Deinococcus geothermalis (strain DSM 11300 / CIP 105573 / AG-3a), this protein is Large ribosomal subunit protein uL4.